The primary structure comprises 596 residues: Proteasome-associated ATPase (596 aa).

A coiled-coil region spans residues 12–94 (SRWERETQDL…KEEIDRLAQP (83 aa)). 280-285 (GCGKTL) contacts ATP. The segment at 595 to 596 (YL) is docks into pockets in the proteasome alpha-ring.

Belongs to the AAA ATPase family. Homohexamer. Assembles into a hexameric ring structure that caps the 20S proteasome core. Strongly interacts with the prokaryotic ubiquitin-like protein Pup through a hydrophobic interface; the interacting region of ARC lies in its N-terminal coiled-coil domain. There is one Pup binding site per ARC hexamer ring. Upon ATP-binding, the C-terminus of ARC interacts with the alpha-rings of the proteasome core, possibly by binding to the intersubunit pockets.

Its pathway is protein degradation; proteasomal Pup-dependent pathway. ATPase which is responsible for recognizing, binding, unfolding and translocation of pupylated proteins into the bacterial 20S proteasome core particle. May be essential for opening the gate of the 20S proteasome via an interaction with its C-terminus, thereby allowing substrate entry and access to the site of proteolysis. Thus, the C-termini of the proteasomal ATPase may function like a 'key in a lock' to induce gate opening and therefore regulate proteolysis. This is Proteasome-associated ATPase from Stackebrandtia nassauensis (strain DSM 44728 / CIP 108903 / NRRL B-16338 / NBRC 102104 / LLR-40K-21).